A 181-amino-acid polypeptide reads, in one-letter code: RING-H2 finger protein ATL56 (181 aa).

Residues 1–24 (MPPTNNYRISGEPPSTTPSHPPPK) form a disordered region. Over residues 15–24 (STTPSHPPPK) the composition is skewed to pro residues. The chain crosses the membrane as a helical span at residues 32-52 (LFLVGVIMFSIFFLFLVLIGI). The RING-type; atypical zinc-finger motif lies at 110 to 152 (CVVCFDGFRQGQWCRNLPGCGHVFHRKCVDTWLLKASTCPICR).

Belongs to the RING-type zinc finger family. ATL subfamily.

It is found in the membrane. It catalyses the reaction S-ubiquitinyl-[E2 ubiquitin-conjugating enzyme]-L-cysteine + [acceptor protein]-L-lysine = [E2 ubiquitin-conjugating enzyme]-L-cysteine + N(6)-ubiquitinyl-[acceptor protein]-L-lysine.. It functions in the pathway protein modification; protein ubiquitination. The polypeptide is RING-H2 finger protein ATL56 (ATL56) (Arabidopsis thaliana (Mouse-ear cress)).